We begin with the raw amino-acid sequence, 188 residues long: Ribosome maturation factor RimP (188 aa).

This sequence belongs to the RimP family.

The protein localises to the cytoplasm. Its function is as follows. Required for maturation of 30S ribosomal subunits. The polypeptide is Ribosome maturation factor RimP (Erythrobacter litoralis (strain HTCC2594)).